The sequence spans 367 residues: Phosphoribosylaminoimidazole-succinocarboxamide synthase (367 aa).

It belongs to the SAICAR synthetase family.

It catalyses the reaction 5-amino-1-(5-phospho-D-ribosyl)imidazole-4-carboxylate + L-aspartate + ATP = (2S)-2-[5-amino-1-(5-phospho-beta-D-ribosyl)imidazole-4-carboxamido]succinate + ADP + phosphate + 2 H(+). Its pathway is purine metabolism; IMP biosynthesis via de novo pathway; 5-amino-1-(5-phospho-D-ribosyl)imidazole-4-carboxamide from 5-amino-1-(5-phospho-D-ribosyl)imidazole-4-carboxylate: step 1/2. The polypeptide is Phosphoribosylaminoimidazole-succinocarboxamide synthase (Colwellia psychrerythraea (strain 34H / ATCC BAA-681) (Vibrio psychroerythus)).